The following is a 377-amino-acid chain: Dihydroorotate dehydrogenase (quinone) (377 aa).

FMN is bound by residues 68-72 (AGFDK) and threonine 92. Lysine 72 is a binding site for substrate. 117 to 121 (NRMGF) is a substrate binding site. 2 residues coordinate FMN: asparagine 149 and asparagine 182. Position 182 (asparagine 182) interacts with substrate. The Nucleophile role is filled by serine 185. A substrate-binding site is contributed by asparagine 187. Positions 224 and 252 each coordinate FMN. A substrate-binding site is contributed by 253–254 (NT). Residues glycine 278, glycine 307, and 328–329 (YT) contribute to the FMN site.

Belongs to the dihydroorotate dehydrogenase family. Type 2 subfamily. Monomer. It depends on FMN as a cofactor.

The protein localises to the cell membrane. The enzyme catalyses (S)-dihydroorotate + a quinone = orotate + a quinol. Its pathway is pyrimidine metabolism; UMP biosynthesis via de novo pathway; orotate from (S)-dihydroorotate (quinone route): step 1/1. Catalyzes the conversion of dihydroorotate to orotate with quinone as electron acceptor. The chain is Dihydroorotate dehydrogenase (quinone) from Thermobifida fusca (strain YX).